The sequence spans 593 residues: Aspartate--tRNA ligase (593 aa).

E180 is a binding site for L-aspartate. Residues 204 to 207 (QIFK) form an aspartate region. R226 lines the L-aspartate pocket. ATP is bound by residues 226-228 (RDE) and Q235. H453 lines the L-aspartate pocket. Residue E487 coordinates ATP. R494 contributes to the L-aspartate binding site. 539–542 (GLDR) is a binding site for ATP.

The protein belongs to the class-II aminoacyl-tRNA synthetase family. Type 1 subfamily. In terms of assembly, homodimer.

It localises to the cytoplasm. The catalysed reaction is tRNA(Asp) + L-aspartate + ATP = L-aspartyl-tRNA(Asp) + AMP + diphosphate. Functionally, catalyzes the attachment of L-aspartate to tRNA(Asp) in a two-step reaction: L-aspartate is first activated by ATP to form Asp-AMP and then transferred to the acceptor end of tRNA(Asp). The chain is Aspartate--tRNA ligase from Clostridium botulinum (strain Loch Maree / Type A3).